Consider the following 308-residue polypeptide: Acetaldehyde dehydrogenase 1 (308 aa).

10-13 (SGNI) provides a ligand contact to NAD(+). Catalysis depends on C128, which acts as the Acyl-thioester intermediate. NAD(+)-binding positions include 159–167 (SAGPGTRAN) and N285.

It belongs to the acetaldehyde dehydrogenase family.

It catalyses the reaction acetaldehyde + NAD(+) + CoA = acetyl-CoA + NADH + H(+). The chain is Acetaldehyde dehydrogenase 1 from Salinispora arenicola (strain CNS-205).